Here is a 731-residue protein sequence, read N- to C-terminus: Unconventional prefoldin RPB5 interactor-like protein (731 aa).

2 coiled-coil regions span residues 91 to 115 (RLKL…KLHT) and 143 to 176 (LAEH…LRKL). The span at 205–217 (PLKSTNESSPKSL) shows a compositional bias: polar residues. Disordered stretches follow at residues 205–224 (PLKS…EEDE), 259–302 (MSGE…EEEV), and 370–396 (ASEE…TVSE). Residues 220-258 (EEEDELWKKLEAEEQNEADELSSEAEESLKTTDNLVRQL) are a coiled coil. Positions 285-300 (ISEDDGDDDDEGDQEE) are enriched in acidic residues. Coiled-coil stretches lie at residues 357-379 (DDLQ…EVVE) and 452-477 (SIKT…VKEN). 2 stretches are compositionally biased toward polar residues: residues 508-518 (GAIPSPSSDQS) and 575-599 (SQFS…TSND). Disordered stretches follow at residues 508–527 (GAIP…KPSD), 567–682 (GSAY…DLRD), and 694–731 (VEKE…LNKT). Residues 611–621 (FYEKYEKDRAK) are compositionally biased toward basic and acidic residues. The segment covering 623 to 644 (SKSNSSEGDATDPESATKSILR) has biased composition (polar residues). Positions 661–673 (KKGRKVRNQKKKE) are enriched in basic residues. Basic and acidic residues predominate over residues 721–731 (RFKEQRALNKT).

The protein belongs to the RNA polymerase II subunit 5-mediating protein family. As to quaternary structure, interacts with serine/threonine-protein phosphatases flw/PP1beta9C and Pp1-87B with higher affinity for Pp1-87B.

The protein resides in the cytoplasm. Its subcellular location is the chromosome. It localises to the nucleus. Functionally, inhibits the activity of serine/threonine-protein phosphatases flw/PP1beta9C and Pp1-87B. Required for germ line cell viability and differentiation, normal transcriptional activity and maintenance of DNA integrity. The polypeptide is Unconventional prefoldin RPB5 interactor-like protein (Drosophila melanogaster (Fruit fly)).